Reading from the N-terminus, the 341-residue chain is Major histocompatibility complex class I-related protein 1 (341 aa).

A signal peptide spans 1–22 (MGELMAFLLPLIIVLMVKHSDS). The tract at residues 23–109 (RTHSLRYFRL…KRLQRHYNHS (87 aa)) is alpha-1. Positions 23–201 (RTHSLRYFRL…EYGKDTLQRT (179 aa)) are antigen-binding cleft. The Extracellular segment spans residues 23–302 (RTHSLRYFRL…QESETIPLVM (280 aa)). 5-(2-oxoethylideneamino)-6-(D-ribitylamino)uracil-binding residues include Arg-31, Ser-46, and Lys-65. The 5-(2-oxopropylideneamino)-6-(D-ribitylamino)uracil site is built by Arg-31, Ser-46, and Lys-65. Positions 31, 46, and 65 each coordinate 7-hydroxy-6-methyl-8-(1-D-ribityl)lumazine. Arg-31 is an 8-(9H-purin-6-yl)-2-oxa-8-azabicyclo[3.3.1]nona-3,6-diene-4,6-dicarbaldehyde binding site. 8-(9H-purin-6-yl)-2-oxa-8-azabicyclo[3.3.1]nona-3,6-diene-4,6-dicarbaldehyde is bound by residues Lys-65 and His-80. Lys-65 provides a ligand contact to 2-amino-4-oxopteridine-6-carbaldehyde. Lys-65 is a binding site for pyridoxal. Asn-107 carries an N-linked (GlcNAc...) asparagine glycan. Positions 110-201 (GSHTYQRMIG…EYGKDTLQRT (92 aa)) are alpha-2. The 5-(2-oxoethylideneamino)-6-(D-ribitylamino)uracil site is built by Arg-116, Tyr-174, and Gln-175. Residues Arg-116, Tyr-174, and Gln-175 each contribute to the 5-(2-oxopropylideneamino)-6-(D-ribitylamino)uracil site. 7-hydroxy-6-methyl-8-(1-D-ribityl)lumazine-binding residues include Arg-116, Tyr-174, and Gln-175. Arg-116 provides a ligand contact to 8-(9H-purin-6-yl)-2-oxa-8-azabicyclo[3.3.1]nona-3,6-diene-4,6-dicarbaldehyde. 2 disulfides stabilise this stretch: Cys-120–Cys-183 and Cys-222–Cys-278. The interval 202–293 (EPPLVRVNRK…GVHMVLQVPQ (92 aa)) is alpha-3. In terms of domain architecture, Ig-like C1-type spans 203-299 (PPLVRVNRKE…QVPQESETIP (97 aa)). Positions 294–302 (ESETIPLVM) are connecting peptide. The helical transmembrane segment at 303 to 323 (KAVSGSIVLVIVLAGVGVLVW) threads the bilayer. The Cytoplasmic portion of the chain corresponds to 324–341 (RRRPREQNGAIYLPTPDR).

The protein belongs to the MHC class I family. Heterotrimer that consists of MR1, B2M and a metabolite antigen. Major classes of metabolite ligands presented by MR1 include riboflavin-related antigens, pyrimidines and ribityl lumazines, nucleobase adducts and folate derivatives. Forms reversible covalent Schiff base complexes with microbial pyrimidine-based metabolite, which serves as a molecular switch triggering complete folding, stable association with B2M and translocation of the ternary complex from endoplasmic reticulum to the plasma membrane. Alternatively, forms non-Schiff base complexes with ribityl lumazines. On antigen-presenting cells, the ternary complex interacts with TCR on MR1-restricted T cells, predominantly represented by CD8-positive and CD4- and CD8-double negative MAIT cell subsets. Interacts with TAPBP and TAPBPL chaperones in the endoplasmic reticulum. TAPBP associated or not with MHC class I peptide loading complex binds ligand-free MR1 or MR1-B2M complex, providing for stable MR1 pools ready for metabolite antigen processing. TAPBPL interacts with MR1 in a ligand-independent way; this interaction may stabilize MR1 pool and facilitate ligand loading and dissociation. MR1-B2M heterodimer adopts a topology similar to classical MHC class I molecules, with alpha-1 and alpha-2 domains of MR1 forming the antigen-binding cleft composed of two alpha-helices resting on a floor of 7-stranded anti-parallel beta-pleated sheet. The ribityl moiety of pyrimidine-based antigens is recognized by Tyr-95 residue in the CDR3 alpha loop of the invariant TRAV1-2 TCR. As to quaternary structure, homodimerizes and does not associate with B2M. In terms of processing, N-glycosylated. Ubiquitous. Low expression is detected in peripheral blood B cells, T cells, monocytes and in bronchial epithelial cells (at protein level). Expressed in plasmablasts or plasma B cells in the lamina propria of ileum, appendix and colon (at protein level). Highly expressed on a subset of CD45-positive CD3-positive thymocytes (at protein level).

The protein localises to the cell membrane. It localises to the endoplasmic reticulum membrane. The protein resides in the golgi apparatus membrane. It is found in the early endosome membrane. Its subcellular location is the late endosome membrane. The protein localises to the secreted. Its activity is regulated as follows. Inhibited by pterin-based metabolites such as 6-formylpterin (6-FP, a product of folic acid photodegradation). 6-FP competitively inhibits MAIT cell activation by 5-OP-RU. Modulated by commonly prescribed anti-inflammatory drug metabolites. Inhibited by salicilates such as 3-formylsalicylic and 5-formylsalicylic acids. Activated by diclofenac and/or its hydroxy metabolites. Antigen-presenting molecule specialized in displaying microbial pyrimidine-based metabolites to alpha-beta T cell receptors (TCR) on innate-type mucosal-associated invariant T (MAIT) cells. In complex with B2M preferentially presents riboflavin-derived metabolites to semi-invariant TRAV1.2 TCRs on MAIT cells, guiding immune surveillance of the microbial metabolome at mucosal epithelial barriers. Signature pyrimidine-based microbial antigens are generated via non-enzymatic condensation of metabolite intermediates of the riboflavin pathway with by-products arising from other metabolic pathways such as glycolysis. Typical potent antigenic metabolites are 5-(2-oxoethylideneamino)-6-D-ribitylaminouracil (5-OE-RU) and 5-(2-oxopropylideneamino)-6-D-ribitylaminouracil (5-OP-RU), products of condensation of 5-amino-6-D-ribityaminouracil (5-A-RU) with glyoxal or methylglyoxal by-products, respectively. May present microbial antigens to various TRAV1-2-negative MAIT cell subsets, providing for unique recognition of diverse microbes, including pathogens that do not synthesize riboflavin. Upon antigen recognition, elicits rapid innate-type MAIT cell activation to eliminate pathogenic microbes by directly killing infected cells. During T cell development, drives thymic selection and post-thymic terminal differentiation of MAIT cells in a process dependent on commensal microflora. Acts as an immune sensor of cancer cell metabolome. May present a tumor-specific or -associated metabolite essential for cancer cell survival to a 'pan-cancer' TCR consisting of TRAV38.2-DV8*TRAJ31 alpha chain paired with a TRBV25.1*TRBJ2.3 beta chain on a non-MAIT CD8-positive T cell clone (MC.7.G5), triggering T cell-mediated killing of a wide range of cancer cell types. In terms of biological role, allele MR1*01: Presents microbial-derived metabolite 5-OP-RU to semi-invariant TRAV1.2-TRAJ33-TRBV6.1 (A-F7) TCR on MAIT cells. Presents nucleobase carbonyl adducts generated during oxidative stress. Captures M3Ade, a nucleobase adduct composed of one adenine modified by a malondialdehyde trimer, for recognition by MR1-restricted T cell clones expressing a polyclonal TCR repertoire. Displays moderate binding affinity toward tumor-enriched pyridoxal and pyridoxal 5'-phosphate antigens. Its function is as follows. Allele MR1*04: Presents tumor-enriched metabolite pyridoxal to pan-cancer 7.G5 TCR on T cells enabling preferential recognition of cancer cells. May act as an alloantigen. This chain is Major histocompatibility complex class I-related protein 1, found in Homo sapiens (Human).